Here is a 152-residue protein sequence, read N- to C-terminus: Troponin C (152 aa).

Threonine 1 is modified (N-acetylthreonine). EF-hand domains lie at 9–44 (KQILDAKQAFCNVDKKKEGTVSCKDLGAIFKSLGLL), 45–80 (VKDDKIKDWSDEMDEEATGRLNCDAWIQLFERKLKE), 82–117 (LDERELKEAFRVLDKEKKGVIKVDVLRWILSSLGDE), and 118–152 (LTEEEIENMIAETDTDGSGTVDYEEFKCLMMSSDA). Positions 131, 133, 135, 137, and 142 each coordinate Ca(2+).

Belongs to the troponin C family.

In terms of biological role, troponin is the central regulatory protein of striated muscle contraction. Tn consists of three components: Tn-I which is the inhibitor of actomyosin ATPase, Tn-T which contains the binding site for tropomyosin and Tn-C. The binding of calcium to Tn-C abolishes the inhibitory action of Tn on actin filaments. This Mizuhopecten yessoensis (Japanese scallop) protein is Troponin C.